A 181-amino-acid chain; its full sequence is Immunity-related GTPase family M protein (181 aa).

The IRG-type G domain occupies 32–181; sequence TPVNITMAGD…NLQKERVCEY (150 aa). GTP-binding positions include 41 to 48, 66 to 70, and 147 to 149; these read DSGNGMST, TELVK, and KLD.

The protein belongs to the TRAFAC class dynamin-like GTPase superfamily. IRG family. In terms of assembly, interacts with ULK1; promoting the coassembly of ULK1 and BECN1. Interacts with BECN1; enhancing BECN1-interacting partners and influencing the composition of the BECN1 complex. Interacts with ATG16L1. Interacts with NOD2; promoting IRGM 'Lys-63'-linked polyubiquitination, which is required for interactions with the core autophagy factors. Interacts with STX17; promoting STX17 recruitment to autophagosomes. Interacts with ATG8 proteins (GABARAP, GABARAPL1, GABARAPL2, MAP1LC3A, MAP1LC3B and MAP1LC3C); promoting STX17 recruitment to autophagosomes. Interacts with TFEB; promoting association between TFEB and PPP3CB and TFEB dephosphorylation. Interacts with PPP3CB; promoting association between TFEB and PPP3CB and TFEB dephosphorylation. Interacts with NLRP3; preventing NLRP3 inflammasome assembly and promoting SQSTM1/p62-dependent autophagic degradation of NLRP3. Interacts with CGAS; promoting SQSTM1/p62-dependent autophagic degradation of CGAS. Interacts with RIGI/RIG-I; promoting SQSTM1/p62-dependent autophagic degradation of RIGI/RIG-I. Interacts with NOD1; promoting SQSTM1/p62-dependent autophagic degradation of RIGI/RIG-I. Interacts with NOD2; promoting SQSTM1/p62-dependent autophagic degradation of RIGI/RIG-I. Interacts with RIPK2; promoting SQSTM1/p62-dependent autophagic degradation of RIGI/RIG-I. Post-translationally, ubiquitinated via 'Lys-63'-linked polyubiquitination in a NOD2-dependent process. 'Lys-63'-linked polyubiquitination is required for interactions with the core autophagy factors. In terms of tissue distribution, widely expressed (at protein level). Expressed in several tissues including colon, small bowel and peripheral blood leukocytes.

Its subcellular location is the golgi apparatus membrane. The protein resides in the cell membrane. It is found in the cytoplasmic vesicle. The protein localises to the phagosome membrane. It localises to the autophagosome membrane. Its subcellular location is the lysosome membrane. The protein resides in the late endosome membrane. It is found in the mitochondrion membrane. The protein localises to the cell projection. It localises to the phagocytic cup. Its subcellular location is the mitochondrion. The catalysed reaction is GTP + H2O = GDP + phosphate + H(+). Functionally, immunity-related GTPase that plays important roles in innate immunity and inflammatory response. Acts as a dynamin-like protein that binds to intracellular membranes and promotes remodeling and trafficking of those membranes. Required for clearance of acute protozoan and bacterial infections by interacting with autophagy and lysosome regulatory proteins, thereby promoting the fusion of phagosomes with lysosomes for efficient degradation of cargo including microbes. Regulates selective autophagy, including xenophagy and mitophagy, both directly and indirectly. Directly regulates autophagy by acting as a molecular adapter that promotes the coassembly of the core autophagy machinery to mediate antimicrobial defense: IRGM (1) activates AMPK, which in turn phosphorylates ULK1 and BECN1 to induce autophagy, (2) promotes the coassembly of ULK1 and BECN1, enhancing BECN1-interacting partners and (3) influences the composition of the BECN1 complex, by competing with the negative regulators BCL2 and RUBCN, to trigger autophagy. Also activates autophagy by promoting recruitment of STX17 to autophagosomes. In collaboration with ATG8 proteins, regulate lysosomal biogenesis, a fundamental process for any autophagic pathway, by promoting TFEB dephosphorylation. Also modulates autophagy by assisting with autophagosome formation and preventing lysosomal deacidification. While activating autophagy, acts as a key negative regulator of the inflammatory and interferon responses both by (1) promoting mitophagy and (2) mediating autophagy-dependent degradation of effectors of the inflammatory response. Promotes degradation of damaged and IFNG/IFN-gamma-stressed mitochondria via mitophagy, preventing cytosolic release of ligands that activate inflammation. Acts as a suppressor of inflammation by promoting recruitment of inflammation effectors, such as CGAS, RIGI/RIG-I and NLRP3, to autophagosome membranes, leading to their SQSTM1/p62-dependent autophagic degradation. Also directly inhibits assembly of the NLRP3 inflammasome by preventing the association between NLRP3 and PYCARD. Acts as a negative regulator of antiviral innate immune response by suppressing the RIPK2-dependent pro-inflammatory response: mediates recruitment of RIPosomes, composed of RIPK2 and NOD1 or NOD2, to autophagosome membranes, promoting their SQSTM1/p62-dependent autophagic degradation. Acts as a positive regulator of mitophagy in response to intracellular mycobacteria infection: specifically binds cardiolipin, leading to its translocation to mitochondria, where it promotes affected mitochondrial fission and mitophagy. In terms of biological role, (Microbial infection) Following infection by hepatitis C virus (HCV), promotes HCV-triggered membrane remodeling, leading to autophagy and Golgi fragmentation, a step required for HCV replication. The chain is Immunity-related GTPase family M protein from Homo sapiens (Human).